Consider the following 171-residue polypeptide: Ribosome maturation factor RimM (171 aa).

The region spanning 97 to 169 (DGEFYYHEII…RVDVDIMEGL (73 aa)) is the PRC barrel domain.

The protein belongs to the RimM family. As to quaternary structure, binds ribosomal protein uS19.

It is found in the cytoplasm. In terms of biological role, an accessory protein needed during the final step in the assembly of 30S ribosomal subunit, possibly for assembly of the head region. Essential for efficient processing of 16S rRNA. May be needed both before and after RbfA during the maturation of 16S rRNA. It has affinity for free ribosomal 30S subunits but not for 70S ribosomes. The chain is Ribosome maturation factor RimM from Lactococcus lactis subsp. cremoris (strain MG1363).